A 234-amino-acid polypeptide reads, in one-letter code: 7-carboxy-7-deazaguanine synthase (234 aa).

Substrate-binding positions include 36-38 and Arg51; that span reads IQG. The 193-residue stretch at 42–234 folds into the Radical SAM core domain; the sequence is FVGYPSIFIR…LQTHKFLGIE (193 aa). [4Fe-4S] cluster contacts are provided by Cys55, Cys59, and Cys62. Mg(2+) is bound at residue Thr64. Thr100 serves as a coordination point for substrate. Residues Gly102, 144-146, and 195-198 each bind S-adenosyl-L-methionine; these read SPK and QSMD.

The protein belongs to the radical SAM superfamily. 7-carboxy-7-deazaguanine synthase family. In terms of assembly, homodimer. Requires [4Fe-4S] cluster as cofactor. The cofactor is S-adenosyl-L-methionine. It depends on Mg(2+) as a cofactor.

The enzyme catalyses 6-carboxy-5,6,7,8-tetrahydropterin + H(+) = 7-carboxy-7-deazaguanine + NH4(+). It participates in purine metabolism; 7-cyano-7-deazaguanine biosynthesis. In terms of biological role, catalyzes the complex heterocyclic radical-mediated conversion of 6-carboxy-5,6,7,8-tetrahydropterin (CPH4) to 7-carboxy-7-deazaguanine (CDG), a step common to the biosynthetic pathways of all 7-deazapurine-containing compounds. In Rickettsia prowazekii (strain Madrid E), this protein is 7-carboxy-7-deazaguanine synthase.